The following is a 73-amino-acid chain: uncharacterized protein (73 aa).

Positions 20–49 form a coiled coil; it reads NATYNKNLELEKRLAKIRNEIPNKSKLIAT.

This is an uncharacterized protein from Acheta domesticus (House cricket).